The following is a 742-amino-acid chain: MKRASLGGHAPVSLPSLNDDALEKKRAKENSRKQRELRRSSALHSITPRRESLNNSSPFNSSHQVPVLSNFEEWIKLATDNKINSTNTWNFALIDYFHDMSLLRDGEDINFQKASCTLDGCVKIYTSRIDSVATETGKLLSGLANDSKVLQQTEEGEDAENDDEDLQKKKERKRAQRSVKTLVKDFESIRAKKFELECSFDPLFKKMCADFDEDGAKGLLMNHLCVDQHGRIVFDSSDTVIKDLENKDVEAESQEAVVAAPIESHDTEMTNVHDNISRETLNGIYKCYFTDIDQLTICPSLQGFEFDSKGNLDVSLLKSLSDEVNMITTTSLVDNTMEKTDADAASLSSDSDGEEGHIVHALEEMAYDEENPYVDVVPKAMDESENPDFGVDTEVNMADGSTMNENYSIISTAAANGVYEYFDKSMKKNWAGPEHWRIQALRKNINNASTVFNSSNTAESSDNVSRSLSSTERKKRRELDNAIDFLQEVDVEALFTPATSSLKLPKSHWKRHNRCLLPDDYQYDSKRLLQLFLKPKMSVLPNADGEGQLQLNKALDDENDLDGIQPHGFDSDGSDNVDEGIPPYGFGDSDSPKQTPLLTPPSSSGFGDNLLLTARLAKPDMLNYAKRAKKVDVRVLKEKLWKCLDLENTIKENSINSHIEGSEMESEETNMPVKSFFSTVNQLEETYEKKELKDISTSFAFICVLHLANEHNLELTSNEDFSDVFIRPGPNLTTLEALENDV.

4 disordered regions span residues 1 to 62, 151 to 172, 452 to 473, and 564 to 604; these read MKRA…FNSS, QQTE…KKER, FNSS…STER, and IQPH…PSSS. Residues 21–39 show a composition bias toward basic and acidic residues; that stretch reads ALEKKRAKENSRKQRELRR. Positions 53-62 are enriched in polar residues; that stretch reads LNNSSPFNSS. Acidic residues predominate over residues 154-165; sequence EEGEDAENDDED. Polar residues-rich tracts occupy residues 452–470 and 592–604; these read FNSS…SLSS and PKQT…PSSS.

It belongs to the CND2 (condensin subunit 2) family. In terms of assembly, component of the condensin complex, which contains the cut14/smc2 and cut3/smc2 heterodimer, and three non SMC subunits that probably regulate the complex: cnd1, cnd2 and cnd3.

It localises to the nucleus. It is found in the cytoplasm. The protein localises to the chromosome. Regulatory subunit of the condensin complex, a complex required for conversion of interphase chromatin into mitotic-like condense chromosomes. The condensin complex probably introduces positive supercoils into relaxed DNA in the presence of type I topoisomerases and converts nicked DNA into positive knotted forms in the presence of type II topoisomerases. The condensin complex probably also plays a role during interphase in processes such as DNA repair. The protein is Condensin complex subunit 2 (cnd2) of Schizosaccharomyces pombe (strain 972 / ATCC 24843) (Fission yeast).